Reading from the N-terminus, the 170-residue chain is Arginine repressor (170 aa).

Belongs to the ArgR family.

The protein localises to the cytoplasm. The protein operates within amino-acid biosynthesis; L-arginine biosynthesis [regulation]. Its function is as follows. Regulates arginine biosynthesis genes. The chain is Arginine repressor from Bifidobacterium longum (strain DJO10A).